A 413-amino-acid polypeptide reads, in one-letter code: Serine hydroxymethyltransferase (413 aa).

(6S)-5,6,7,8-tetrahydrofolate is bound by residues L117 and 121–123 (GHL). K226 is subject to N6-(pyridoxal phosphate)lysine. 349–351 (SPF) contacts (6S)-5,6,7,8-tetrahydrofolate.

This sequence belongs to the SHMT family. In terms of assembly, homodimer. Requires pyridoxal 5'-phosphate as cofactor.

The protein localises to the cytoplasm. The enzyme catalyses (6R)-5,10-methylene-5,6,7,8-tetrahydrofolate + glycine + H2O = (6S)-5,6,7,8-tetrahydrofolate + L-serine. It functions in the pathway one-carbon metabolism; tetrahydrofolate interconversion. The protein operates within amino-acid biosynthesis; glycine biosynthesis; glycine from L-serine: step 1/1. In terms of biological role, catalyzes the reversible interconversion of serine and glycine with tetrahydrofolate (THF) serving as the one-carbon carrier. This reaction serves as the major source of one-carbon groups required for the biosynthesis of purines, thymidylate, methionine, and other important biomolecules. Also exhibits THF-independent aldolase activity toward beta-hydroxyamino acids, producing glycine and aldehydes, via a retro-aldol mechanism. This Listeria welshimeri serovar 6b (strain ATCC 35897 / DSM 20650 / CCUG 15529 / CIP 8149 / NCTC 11857 / SLCC 5334 / V8) protein is Serine hydroxymethyltransferase.